Here is a 261-residue protein sequence, read N- to C-terminus: SLA class II histocompatibility antigen, DQ haplotype C beta chain (261 aa).

Residues 1–31 form the signal peptide; the sequence is MSGMVALRLPRGLWTAALTVMLVVLGAPVAE. The beta-1 stretch occupies residues 32–126; sequence GRDSPQDFVF…IEEGTTLQRR (95 aa). Topologically, residues 32–230 are extracellular; that stretch reads GRDSPQDFVF…RAQSESAQSK (199 aa). Intrachain disulfides connect Cys47/Cys111 and Cys149/Cys205. The N-linked (GlcNAc...) asparagine glycan is linked to Asn51. The tract at residues 127–220 is beta-2; it reads VQPTVTISPS…SLQNPILVEW (94 aa). In terms of domain architecture, Ig-like C1-type spans 129 to 233; that stretch reads PTVTISPSKA…SESAQSKMLS (105 aa). The tract at residues 221–230 is connecting peptide; it reads RAQSESAQSK. A helical transmembrane segment spans residues 231–251; sequence MLSGVGGFVLGLIFLGLGLFI. Over 252-261 the chain is Cytoplasmic; sequence RHRSQKGLVR.

This sequence belongs to the MHC class II family.

The protein localises to the membrane. This Sus scrofa (Pig) protein is SLA class II histocompatibility antigen, DQ haplotype C beta chain.